We begin with the raw amino-acid sequence, 5104 residues long: Malformin synthetase mlfA (5104 aa).

The interval 225–616 is adenylation 1; it reads ERHAVNRPHS…CGRADTQVKL (392 aa). The Carrier 1 domain maps to 757–830; the sequence is SRLEQEIQLA…EAASLAEVQE (74 aa). The residue at position 791 (serine 791) is an O-(pantetheine 4'-phosphoryl)serine. The tract at residues 868-1299 is condensation 1; the sequence is EDVFPCTTMQ…ALNTLSLLQA (432 aa). The tract at residues 1327–1716 is adenylation 2; the sequence is DRWVTRQPEG…GRKDTQVKLR (390 aa). Residues 1854-1931 form the Carrier 2 domain; the sequence is TPASELERTL…QLAAEFGGPA (78 aa). Serine 1891 carries the post-translational modification O-(pantetheine 4'-phosphoryl)serine. Disordered regions lie at residues 1928-1961 and 1998-2025; these read GGPAGQSASSASSTTEERFTFSTPDDSSTNDGVD and TNKTPSVSSSSSSSSSSEKKKKAAKVDS. 2 stretches are compositionally biased toward low complexity: residues 1934 to 1958 and 2003 to 2013; these read SASSASSTTEERFTFSTPDDSSTND and SVSSSSSSSSS. The tract at residues 2066–2481 is condensation 2; that stretch reads EDIYPATPLQ…TVSYSDKEAL (416 aa). The adenylation 3 stretch occupies residues 2504–2896; that stretch reads VRTPHAPAVC…IGRRDGQLKL (393 aa). The 77-residue stretch at 3032 to 3108 folds into the Carrier 3 domain; it reads RPVTSQEREM…QLICHLNTIR (77 aa). Serine 3069 bears the O-(pantetheine 4'-phosphoryl)serine mark. Condensation stretches follow at residues 3125–3590 and 3611–4029; these read WVAL…TYDQ and NIYP…EQLV. Residues 4054–4444 are adenylation 4; that stretch reads HSSREAVCAW…VGRKDNQIKF (391 aa). The Carrier 4 domain maps to 4578-4654; that stretch reads MPSTAAERKM…DLSDQARSLI (77 aa). Serine 4615 is subject to O-(pantetheine 4'-phosphoryl)serine. A condensation 5 region spans residues 4691–5018; sequence DVLPTTSFQR…LQTIVQHQNN (328 aa).

The protein belongs to the NRP synthetase family.

It functions in the pathway secondary metabolite biosynthesis. Nonribosomal peptide synthetase; part of the gene cluster that mediates the biosynthesis of malformins, cyclic pentapeptides with a disulfide bond between 2 consecutive cysteins, that show potential anti-tumor as well as antimalarial and antitrypanosomal properties. The nonribosomal peptide synthetase mlfA is responsible of the formation of the cyclic pentapeptide. The malformin biosynthesis clusters in malformin-producing fungi also contain enzymes involved in the formation of the disulfide bond between the two consecutive cysteins within malformins, in addition to additional tailoring enzymes such as methyltransferases or oxidoreductases. They are also composed of up to 4 major facilitator superfamily transporters, and transcription factors probably involved in the regulation of the expression of those clusters. This chain is Malformin synthetase mlfA, found in Aspergillus vadensis (strain CBS 113365 / IMI 142717 / IBT 24658).